Consider the following 441-residue polypeptide: BTB/POZ domain-containing protein At3g05675 (441 aa).

The 79-residue stretch at 20-98 folds into the BTB domain; it reads SDIVVRLRNE…LYVVSDDVHE (79 aa).

Its pathway is protein modification; protein ubiquitination. Functionally, may act as a substrate-specific adapter of an E3 ubiquitin-protein ligase complex (CUL3-RBX1-BTB) which mediates the ubiquitination and subsequent proteasomal degradation of target proteins. The chain is BTB/POZ domain-containing protein At3g05675 from Arabidopsis thaliana (Mouse-ear cress).